A 63-amino-acid chain; its full sequence is Probable rubredoxin (63 aa).

The region spanning 11–62 (MKRYKCRVCGYIYDPEKGEPRTDTPPGTPFEDLPETWRCPSCGAKKKMFKPL) is the Rubredoxin-like domain. Fe cation contacts are provided by Cys-16, Cys-19, Cys-49, and Cys-52.

This sequence belongs to the rubredoxin family. Fe(3+) is required as a cofactor.

Rubredoxin is a small nonheme, iron protein lacking acid-labile sulfide. Its single Fe, chelated to 4 Cys, functions as an electron acceptor and may also stabilize the conformation of the molecule. This Methanothermobacter thermautotrophicus (strain ATCC 29096 / DSM 1053 / JCM 10044 / NBRC 100330 / Delta H) (Methanobacterium thermoautotrophicum) protein is Probable rubredoxin.